A 231-amino-acid chain; its full sequence is Lytic polysaccharide monooxygenase-like protein X325 (231 aa).

The signal sequence occupies residues 1–17 (MRLSLLVTLALTALIEA). Residue H18 coordinates Cu(2+). N-linked (GlcNAc...) asparagine glycans are attached at residues N34, N55, N98, N133, N174, and N180. Disulfide bonds link C47–C157 and C122–C178. Residue I202 is the site of GPI-anchor amidated isoleucine attachment. A propeptide spans 203 to 231 (ASTTTGSAPRYYSWAGWLPLVAGAIWMAL) (removed in mature form).

It belongs to the X325 family. It depends on Cu(2+) as a cofactor.

It localises to the cell membrane. Its function is as follows. Lytic polysaccharide monooxygenase-like protein that has diverged to biological functions other than polysaccharide degradation since it does not perform oxidative cleavage of polysaccharides. Acts as a cell surface-bound protein that functions in the copper-accumulation pathway. May also act as the major cell wall sensor that regulates MAP kinase-dependent hyphal anastomosis, the fusion of hyphal cells. The polypeptide is Lytic polysaccharide monooxygenase-like protein X325 (Hypocrea jecorina (strain QM6a) (Trichoderma reesei)).